The sequence spans 276 residues: Formamidopyrimidine-DNA glycosylase (276 aa).

P2 (schiff-base intermediate with DNA) is an active-site residue. E3 functions as the Proton donor in the catalytic mechanism. K58 (proton donor; for beta-elimination activity) is an active-site residue. H94, R112, and R157 together coordinate DNA. An FPG-type zinc finger spans residues 242 to 276 (FVYDRAGLPCRVCGTPIKQIVQGQRSTYFCPTCQR). R266 (proton donor; for delta-elimination activity) is an active-site residue.

This sequence belongs to the FPG family. Monomer. Requires Zn(2+) as cofactor.

The catalysed reaction is Hydrolysis of DNA containing ring-opened 7-methylguanine residues, releasing 2,6-diamino-4-hydroxy-5-(N-methyl)formamidopyrimidine.. It catalyses the reaction 2'-deoxyribonucleotide-(2'-deoxyribose 5'-phosphate)-2'-deoxyribonucleotide-DNA = a 3'-end 2'-deoxyribonucleotide-(2,3-dehydro-2,3-deoxyribose 5'-phosphate)-DNA + a 5'-end 5'-phospho-2'-deoxyribonucleoside-DNA + H(+). Functionally, involved in base excision repair of DNA damaged by oxidation or by mutagenic agents. Acts as a DNA glycosylase that recognizes and removes damaged bases. Has a preference for oxidized purines, such as 7,8-dihydro-8-oxoguanine (8-oxoG). Has AP (apurinic/apyrimidinic) lyase activity and introduces nicks in the DNA strand. Cleaves the DNA backbone by beta-delta elimination to generate a single-strand break at the site of the removed base with both 3'- and 5'-phosphates. The sequence is that of Formamidopyrimidine-DNA glycosylase from Paraburkholderia phytofirmans (strain DSM 17436 / LMG 22146 / PsJN) (Burkholderia phytofirmans).